We begin with the raw amino-acid sequence, 89 residues long: Putative defensin-like protein 254 (89 aa).

A signal peptide spans 1-20 (MHNISFKLLLLCDLFLSSSS). Intrachain disulfides connect Cys-31-Cys-48 and Cys-37-Cys-55.

It belongs to the DEFL family.

The protein resides in the secreted. This Arabidopsis thaliana (Mouse-ear cress) protein is Putative defensin-like protein 254.